Reading from the N-terminus, the 152-residue chain is Large ribosomal subunit protein uL15 (152 aa).

Residues 1–12 show a composition bias toward polar residues; that stretch reads MTSTLNTLKSNT. A disordered region spans residues 1–57; that stretch reads MTSTLNTLKSNTGSRKKKLRKGRGIAAGQGASCGFGMRGQKSRSGRPTRPGFEGGQM. The segment covering 14–23 has biased composition (basic residues); the sequence is SRKKKLRKGR. Gly residues predominate over residues 25-37; sequence IAAGQGASCGFGM.

It belongs to the universal ribosomal protein uL15 family. As to quaternary structure, part of the 50S ribosomal subunit.

Its function is as follows. Binds to the 23S rRNA. The sequence is that of Large ribosomal subunit protein uL15 from Prochlorococcus marinus subsp. pastoris (strain CCMP1986 / NIES-2087 / MED4).